Here is a 90-residue protein sequence, read N- to C-terminus: Mitochondrial import inner membrane translocase subunit Tim10 (90 aa).

Positions 29-54 match the Twin CX3C motif motif; the sequence is CHRKCVPPHYKEAELSKGESVCLDRC. 2 disulfide bridges follow: Cys-29-Cys-54 and Cys-33-Cys-50.

Belongs to the small Tim family. In terms of assembly, heterohexamer; composed of 3 copies of TIMM9 and 3 copies of TIMM10/TIM10A, named soluble 70 kDa complex. The complex forms a 6-bladed alpha-propeller structure and associates with the TIMM22 component of the TIM22 complex. Interacts with multi-pass transmembrane proteins in transit. Also forms a complex composed of TIMM9, TIMM10/TIM10A and FXC1/TIM10B.

It localises to the mitochondrion inner membrane. Functionally, mitochondrial intermembrane chaperone that participates in the import and insertion of multi-pass transmembrane proteins into the mitochondrial inner membrane. May also be required for the transfer of beta-barrel precursors from the TOM complex to the sorting and assembly machinery (SAM complex) of the outer membrane. Acts as a chaperone-like protein that protects the hydrophobic precursors from aggregation and guide them through the mitochondrial intermembrane space. This is Mitochondrial import inner membrane translocase subunit Tim10 (Timm10) from Rattus norvegicus (Rat).